Here is a 719-residue protein sequence, read N- to C-terminus: Mini-chromosome maintenance complex-binding protein (719 aa).

Low complexity predominate over residues 152 to 174 (NNNNNNNNNNNNNNNNNNNNNNN). 3 disordered regions span residues 152–179 (NNNN…NEQI), 194–236 (ADMK…QLTK), and 375–416 (TINN…NNNN). The span at 194 to 211 (ADMKNENDEENKKSKDQK) shows a compositional bias: basic and acidic residues. 2 stretches are compositionally biased toward low complexity: residues 212 to 221 (STTTTTTTTS) and 377 to 416 (NNNN…NNNN).

Belongs to the MCMBP family. As to quaternary structure, interacts with the MCM complex.

It localises to the nucleus. In terms of biological role, associated component of the MCM complex that acts as a regulator of DNA replication. Binds to the MCM complex during late S phase and may act by promoting the disassembly of the MCM complex from chromatin. The protein is Mini-chromosome maintenance complex-binding protein (mcmbp) of Dictyostelium discoideum (Social amoeba).